The chain runs to 640 residues: Choline O-acetyltransferase (640 aa).

At Ser-17 the chain carries Phosphoserine. The Proton acceptor role is filled by His-334. Position 365 is a phosphoserine (Ser-365). Residues 412 to 424 (GKTF…YSPD), Ser-450, and Gln-551 each bind CoA. The tract at residues 614 to 640 (CSSRQPADSKPPAPKEKARGPSQAKQS) is disordered.

It belongs to the carnitine/choline acetyltransferase family. Monomer.

It catalyses the reaction choline + acetyl-CoA = acetylcholine + CoA. Its function is as follows. Catalyzes the reversible synthesis of acetylcholine (ACh) from acetyl CoA and choline at cholinergic synapses. This chain is Choline O-acetyltransferase (Chat), found in Rattus norvegicus (Rat).